The sequence spans 573 residues: Urease subunit alpha (573 aa).

A Urease domain is found at 136–573; that stretch reads GAIDCHVHLI…LPMAQRYFLF (438 aa). His-141, His-143, and Lys-224 together coordinate Ni(2+). Lys-224 carries the post-translational modification N6-carboxylysine. A substrate-binding site is contributed by His-226. The Ni(2+) site is built by His-253 and His-279. His-327 acts as the Proton donor in catalysis. Position 367 (Asp-367) interacts with Ni(2+).

Belongs to the metallo-dependent hydrolases superfamily. Urease alpha subunit family. Heterotrimer of UreA (gamma), UreB (beta) and UreC (alpha) subunits. Three heterotrimers associate to form the active enzyme. Ni cation serves as cofactor. In terms of processing, carboxylation allows a single lysine to coordinate two nickel ions.

It is found in the cytoplasm. The enzyme catalyses urea + 2 H2O + H(+) = hydrogencarbonate + 2 NH4(+). Its pathway is nitrogen metabolism; urea degradation; CO(2) and NH(3) from urea (urease route): step 1/1. This is Urease subunit alpha from Mycobacterium sp. (strain JLS).